We begin with the raw amino-acid sequence, 581 residues long: MILSRSVSVLHLCGVSSSAPSKLLSQRFKVSFALAYGSSVSFRLSSLNRSDRKWVRGFASATEAEVEKKGNDTFFADHTVSWKSLGLSDNVSIALRDSGFDRPSLTQAVCIPSILSGKDVIVAAETGSGKTHGYLAPIIDQLTNTALDSEVTNREERPFPLKNISLILCPNVMLCEQVVRMVNGLVDEDGNPLLRVEAVCGSQGWPDRLPDIIVSTPAALLNNIEPKRNRRLEFLRCVKYVVFDEADMLLCGSFQNQIIRLINMLRFDEKQVSRLAKSNLGRPMEIDASVPQIDLENEDDAEFDEGSISEEEDEEEEEEYLDDIAQMPSVEAEAGSDTKKGWRRVRKIYTRSKQYIFIAATLPVNGKKTAGGILKHMFQDAVWVSGNFLHRNSPRLKQKWVEVTVDSQVDALIEAVKNNNNTNTERTMVFANTVEAVEAVADILEKASIQCYRYHKNHKLDERANILADFRETGGVFVCTDAAARGVDVPNVSHVIQADFASSAVDFLHRIGRTARAGQYGTVTSLYTEANRDLVEAIREAVKMGQPVETAFSRKRGFRNKVKKRAFLKAEEAEEPQAVRY.

Residues 80 to 108 (VSWKSLGLSDNVSIALRDSGFDRPSLTQA) carry the Q motif motif. One can recognise a Helicase ATP-binding domain in the interval 111–380 (IPSILSGKDV…GGILKHMFQD (270 aa)). 124 to 131 (AETGSGKT) is an ATP binding site. The DEAD box signature appears at 244–247 (DEAD). Residues 408 to 566 (QVDALIEAVK…GFRNKVKKRA (159 aa)) enclose the Helicase C-terminal domain.

Belongs to the DEAD box helicase family.

It catalyses the reaction ATP + H2O = ADP + phosphate + H(+). This chain is DEAD-box ATP-dependent RNA helicase 22 (RH22), found in Arabidopsis thaliana (Mouse-ear cress).